The sequence spans 175 residues: Clathrin-associated protein AP-3 complex component APS3 (175 aa).

Belongs to the adaptor complexes small subunit family. In terms of assembly, adaptor protein complex 3 (AP-3) is a heterotetramer composed of 2 large adaptins, a medium adaptin and a small adaptin.

The protein localises to the golgi apparatus. It is found in the cytoplasmic vesicle membrane. Its function is as follows. Part of the AP-3 complex, an adapter-related complex which is not clathrin-associated. The complex is associated with the Golgi region as well as more peripheral structures. It facilitates the budding of vesicles from the Golgi membrane. Involved in vacuolar trafficking and contributes to hyphal growth and pathogenesis. This chain is Clathrin-associated protein AP-3 complex component APS3 (APS3), found in Candida albicans (strain SC5314 / ATCC MYA-2876) (Yeast).